The following is a 1281-amino-acid chain: Dynactin subunit 1 (1281 aa).

Residues 1–25 (MAQSKRHVYSRTPSGSRMSAEASAR) are disordered. Residues 48–90 (GATLFATGKWVGVILDEAKGKNDGTVQGRKYFTCDEGHGIFVR) enclose the CAP-Gly domain. A disordered region spans residues 99–225 (DGADTTSPET…EEEGLRAQVR (127 aa)). The segment covering 102 to 114 (DTTSPETPDSSAS) has biased composition (polar residues). A phosphothreonine mark is found at Thr-108, Thr-145, Thr-146, and Thr-147. Residues 129–152 (SKLRGPKPKKAPTARKTTTRRPKP) are compositionally biased toward basic residues. Positions 161-205 (AGASSSLGPSGSASAGELSSSEPSTPAQTPLAAPIIPTPALTSPG) are enriched in low complexity. Residues Ser-179 and Ser-212 each carry the phosphoserine modification. Basic and acidic residues predominate over residues 214-225 (SKEEEGLRAQVR). Coiled-coil stretches lie at residues 217 to 540 (EEGL…QQEA) and 952 to 1043 (IKEL…QSKR). Residues 911–1281 (EYDAERPPSK…LHQLHDRLIS (371 aa)) form an interaction with HPS6 region. Residues 1065-1084 (GEEQQRGGAPGQAPGIVPGP) are disordered.

Belongs to the dynactin 150 kDa subunit family. In terms of assembly, monomer and homodimer. Subunit of dynactin, a multiprotein complex part of a tripartite complex with dynein and a adapter, such as BICDL1, BICD2 or HOOK3. The dynactin complex is built around ACTR1A/ACTB filament and consists of an actin-related filament composed of a shoulder domain, a pointed end and a barbed end. Its length is defined by its flexible shoulder domain. The soulder is composed of 2 DCTN1 subunits, 4 DCTN2 and 2 DCTN3. DCTN1/p150(glued) binds directly to microtubules and to cytoplasmic dynein. The 4 DCNT2 (via N-terminus) bind the ACTR1A filament and act as molecular rulers to determine the length. The pointed end is important for binding dynein-dynactin cargo adapters. Consists of 4 subunits: ACTR10, DCNT4, DCTN5 and DCTN6. The barbed end is composed of a CAPZA1:CAPZB heterodimers, which binds ACTR1A/ACTB filament and dynactin and stabilizes dynactin. Interacts with the C-terminus of MAPRE1, MAPRE2 and MAPRE3. Interacts (via C-terminus) with SNX6. Interacts with CLN3, DYNAP, ECPAS and FBXL5. Interacts with MISP; this interaction regulates its distribution at the cell cortex. Interacts with CEP131. Interacts with CEP126. Interacts with CLIP1. Interacts with dynein intermediate chain and dynein heavy chain. Interacts with PLK1 (via POLO-box domain). Interacts with TBCB. Binds preferentially to tyrosinated microtubules than to detyrosinated microtubules. Interacts with PARD6A. Interacts with HPS6. Interacts with KIF3A. Interacts with BICD2. Interacts with DST (isoform 9). Interacts with DST (isoform 1). Identified in a complex with MREG and RILP. Interacts with BCCIP (isoform 2/alpha). Interacts with DCDC1. Interacts with AKNA. Interacts with DYNC1I2. Interacts with RUFY3 and RUFY4. Post-translationally, ubiquitinated by a SCF complex containing FBXL5, leading to its degradation by the proteasome. Phosphorylation by SLK at Thr-145, Thr-146 and Thr-147 targets DCTN1 to the centrosome. It is uncertain if SLK phosphorylates all three threonines or one or two of them. PLK1-mediated phosphorylation at Ser-179 is essential for its localization in the nuclear envelope, promotes its dissociation from microtubules during early mitosis and positively regulates nuclear envelope breakdown during prophase.

It is found in the cytoplasm. The protein resides in the cytoskeleton. It localises to the microtubule organizing center. The protein localises to the centrosome. Its subcellular location is the centriole. It is found in the spindle. The protein resides in the nucleus envelope. It localises to the cell cortex. Its function is as follows. Part of the dynactin complex that activates the molecular motor dynein for ultra-processive transport along microtubules. Plays a key role in dynein-mediated retrograde transport of vesicles and organelles along microtubules by recruiting and tethering dynein to microtubules. Binds to both dynein and microtubules providing a link between specific cargos, microtubules and dynein. Essential for targeting dynein to microtubule plus ends, recruiting dynein to membranous cargos and enhancing dynein processivity (the ability to move along a microtubule for a long distance without falling off the track). Can also act as a brake to slow the dynein motor during motility along the microtubule. Can regulate microtubule stability by promoting microtubule formation, nucleation and polymerization and by inhibiting microtubule catastrophe in neurons. Inhibits microtubule catastrophe by binding both to microtubules and to tubulin, leading to enhanced microtubule stability along the axon. Plays a role in metaphase spindle orientation. Plays a role in centriole cohesion and subdistal appendage organization and function. Its recruitment to the centriole in a KIF3A-dependent manner is essential for the maintenance of centriole cohesion and the formation of subdistal appendage. Also required for microtubule anchoring at the mother centriole. Plays a role in primary cilia formation. The polypeptide is Dynactin subunit 1 (DCTN1) (Sus scrofa (Pig)).